The sequence spans 250 residues: Imidazole glycerol phosphate synthase subunit HisF (250 aa).

Residues aspartate 11 and aspartate 130 contribute to the active site.

It belongs to the HisA/HisF family. As to quaternary structure, heterodimer of HisH and HisF.

Its subcellular location is the cytoplasm. It carries out the reaction 5-[(5-phospho-1-deoxy-D-ribulos-1-ylimino)methylamino]-1-(5-phospho-beta-D-ribosyl)imidazole-4-carboxamide + L-glutamine = D-erythro-1-(imidazol-4-yl)glycerol 3-phosphate + 5-amino-1-(5-phospho-beta-D-ribosyl)imidazole-4-carboxamide + L-glutamate + H(+). The protein operates within amino-acid biosynthesis; L-histidine biosynthesis; L-histidine from 5-phospho-alpha-D-ribose 1-diphosphate: step 5/9. IGPS catalyzes the conversion of PRFAR and glutamine to IGP, AICAR and glutamate. The HisF subunit catalyzes the cyclization activity that produces IGP and AICAR from PRFAR using the ammonia provided by the HisH subunit. This Bacteroides fragilis (strain ATCC 25285 / DSM 2151 / CCUG 4856 / JCM 11019 / LMG 10263 / NCTC 9343 / Onslow / VPI 2553 / EN-2) protein is Imidazole glycerol phosphate synthase subunit HisF.